A 233-amino-acid chain; its full sequence is Purine nucleoside phosphorylase DeoD-type (233 aa).

His4 contacts a purine D-ribonucleoside. Residues Gly20, Arg24, Arg43, and 87–90 (RVGT) contribute to the phosphate site. A purine D-ribonucleoside contacts are provided by residues 178–180 (EME) and 202–203 (SD). The active-site Proton donor is Asp203.

It belongs to the PNP/UDP phosphorylase family. In terms of assembly, homohexamer; trimer of homodimers.

It catalyses the reaction a purine D-ribonucleoside + phosphate = a purine nucleobase + alpha-D-ribose 1-phosphate. The enzyme catalyses a purine 2'-deoxy-D-ribonucleoside + phosphate = a purine nucleobase + 2-deoxy-alpha-D-ribose 1-phosphate. Catalyzes the reversible phosphorolytic breakdown of the N-glycosidic bond in the beta-(deoxy)ribonucleoside molecules, with the formation of the corresponding free purine bases and pentose-1-phosphate. This Listeria innocua serovar 6a (strain ATCC BAA-680 / CLIP 11262) protein is Purine nucleoside phosphorylase DeoD-type.